Consider the following 385-residue polypeptide: Histidinol-phosphate aminotransferase (385 aa).

An N6-(pyridoxal phosphate)lysine modification is found at Lys230.

Belongs to the class-II pyridoxal-phosphate-dependent aminotransferase family. It depends on pyridoxal 5'-phosphate as a cofactor.

The catalysed reaction is L-histidinol phosphate + 2-oxoglutarate = 3-(imidazol-4-yl)-2-oxopropyl phosphate + L-glutamate. It participates in amino-acid biosynthesis; L-histidine biosynthesis; L-histidine from 5-phospho-alpha-D-ribose 1-diphosphate: step 7/9. This is Histidinol-phosphate aminotransferase from Saccharomyces cerevisiae (strain ATCC 204508 / S288c) (Baker's yeast).